We begin with the raw amino-acid sequence, 147 residues long: Hemoglobin subunit beta (147 aa).

S2 carries the N-acetylserine modification. The Globin domain occupies 3-147 (FLSAEEKNLV…VASALAHRYH (145 aa)). S45 carries the phosphoserine modification. K60 bears the N6-acetyllysine mark. H64 contributes to the heme b binding site. An N6-acetyllysine modification is found at K83. A heme b-binding site is contributed by H93. C94 bears the S-nitrosocysteine mark.

This sequence belongs to the globin family. In terms of assembly, heterotetramer of two alpha chains and two beta chains. Red blood cells.

Functionally, involved in oxygen transport from the lung to the various peripheral tissues. This Panthera pardus orientalis (Amur leopard) protein is Hemoglobin subunit beta (HBB).